Reading from the N-terminus, the 1595-residue chain is DNA-directed RNA polymerase subunit beta'' (1595 aa).

Zn(2+) contacts are provided by cysteine 216, cysteine 286, cysteine 294, and cysteine 297.

It belongs to the RNA polymerase beta' chain family. RpoC2 subfamily. In plastids the minimal PEP RNA polymerase catalytic core is composed of four subunits: alpha, beta, beta', and beta''. When a (nuclear-encoded) sigma factor is associated with the core the holoenzyme is formed, which can initiate transcription. The cofactor is Zn(2+).

It is found in the plastid. Its subcellular location is the chloroplast. It catalyses the reaction RNA(n) + a ribonucleoside 5'-triphosphate = RNA(n+1) + diphosphate. Its function is as follows. DNA-dependent RNA polymerase catalyzes the transcription of DNA into RNA using the four ribonucleoside triphosphates as substrates. The chain is DNA-directed RNA polymerase subunit beta'' from Bigelowiella natans (Pedinomonas minutissima).